Here is a 278-residue protein sequence, read N- to C-terminus: PILR alpha-associated neural protein (278 aa).

The signal sequence occupies residues 1 to 27 (MWSAQLLSQLLPLWPLLLLSVLPPAQG). Positions 25 to 93 (AQGSSHRSPP…PSGFEEGPPS (69 aa)) are disordered. The Extracellular segment spans residues 28–174 (SSHRSPPAPA…FGGRGEGVDP (147 aa)). Residue Thr-136 is glycosylated (O-linked (GalNAc...) threonine). Residues 175–195 (QLYVTITISIIIVLVATGIIF) form a helical membrane-spanning segment. The Cytoplasmic portion of the chain corresponds to 196–278 (KFCWDRSQKR…QLNRIPLVNL (83 aa)). A disordered region spans residues 206-278 (RRPSGQQGAL…QLNRIPLVNL (73 aa)). The span at 209–225 (SGQQGALRQEESQQPLT) shows a compositional bias: polar residues.

Post-translationally, O-glycosylation at Thr-136 is essential for recognition by PILRA. As to expression, mainly expressed in brain and spinal cord. Weak expression also detected in heart, kidney, spleen and lymph node. Virtually no expression detected in liver and embryo relative to brain.

It localises to the membrane. Functionally, acts as a ligand for PILRA in neuronal tissues, where it may be involved in immune regulation. This chain is PILR alpha-associated neural protein (Pianp), found in Mus musculus (Mouse).